Here is a 94-residue protein sequence, read N- to C-terminus: Phormicin (94 aa).

A signal peptide spans 1–23; the sequence is MKFFMVFVVTFCLAVCFVSQSLA. A propeptide spanning residues 24–54 is cleaved from the precursor; that stretch reads IPADAANDAHFVDGVQALKEIEPELHGRYKR. 3 cysteine pairs are disulfide-bonded: cysteine 57–cysteine 84, cysteine 70–cysteine 90, and cysteine 74–cysteine 92.

Belongs to the invertebrate defensin family. Type 1 subfamily.

The protein resides in the secreted. Responsible for the anti Gram-positive activity of immune hemolymph of P.terraenovae. This is Phormicin from Protophormia terraenovae (Northern blowfly).